Consider the following 2157-residue polypeptide: MQPHRVFIFGDQTGGFATGLQQLLLDKTNPSLVYFVDHANLALRQELSRLPSTDRETLPLIGSVQDILTLHKKGERNVVIDSILSTVYHLTCFIYKYGNAGCPYPNGQDIHVTGICVGSLAAAAVSCSRSIGDVIVAGIVAIQAALRVGLRAHQAALLINNRAAPHTHWSYAVSTESLRLDLIKDALAKFAQDMDTSPLSHPYISAIGLDSVTVSGPPSQLHQFWRENTPSHKPIPIPIWAPYHGPHIFGDSDVETIIESLHPIPKLSQQAPLISSGSGVMASQTLADLIRAALQDILLHRLDLPALVGHIKDIFRSSPNQDFAMTPIATNAAAGLVAATAKAAGNTGSVDNEIMDAAALAGSASRATSAKTHDAKIAIIGMSGRFPEAADLDSFWSLLEQGVDAYRPVPPDRFDAHAHHDETGRRKNTSRVLGGCWINQPGLFDPKFFSISPKEAEQSDPAQRLALQTAYEALEMAGVVPDRTQSTQRDRVGVFYGMVSDDWREINSGQNIDTYFIPGGIRAFTPGRINYHFKFSGPSITVDTACSSSLAAIHVACNSLWRGDCDTAVAGGVNVLTNPDIFAGLDRGHFLSTTGNCKTFDDDADGYCRADGVGTVILKRLEDAVMDKDPILAVLNSAYTNHSAEAVSITRPHAGAQELIFSKLLRETGIHPHDVSYIEMHGTGTQAGDATEMSSVLRTFASDTSRLSNQTLHLGSAKSNVGHGESASGVTSLIKVLLMMKHNTIPPHCGIKGRINHRFPTDLRERNVFIASQPVAWNRPHAGSGKRRVFINNFSAAGGNSALLLEDAPAGEHPETKDPRSTHIVAVSAKSSTSLANNLKRLKDFVQDNIYNLDSLSKLSYTTTARRIHYPFRAAMTASSRDQLLQGIESVLLRDEMPKPCKGQKNIGFVFSGQGAQYAGMGRHLFQNNHTFRTQILACNRICLSQGFPSILEIFTQDVDMNSLEPLVFQLGTTCLQTSLVSFWKSLGVTPDFCIGHSLGEYAALQAAGVLSVSDTIYLTGIRARMLQEKCSAGSHAMLAVRAPLARVNALLDPGIHEVTCLNGPHDVVIGGRVADVEDLEKELAKEDIKAVKVSVPFAFHSTQVDPILGEFCAAARGVPFQTQNIPVISTLLGEVVQPETTGVFGPEYLKRHCREPVNFAAAVQAGRDANLIHAGTVFVEIGPHPVCLALLKSNMGPDAVTLASLHRKDDGWKVLADTLAALYRSGLKINWDELHRDFASCQEVLPLPSYSWDNKNYWIQYVHNWTLTKGDEPAAVAEATALQAPDICTSSVQKIIQQTDGPGSLVTIVAQSDFGSARLAEVAQGHKVNGEMLCTSSLYAEIGMTLGRQLLEKHRPDLQGYSTEIQDMSVDKPLILKDQNKQTLFRAEVVHDKSTHTAAMSIYSVDSAGNKTVDHARCLLCFADPNSWLDEWERTYYLIDRSVRWLEARAEQGTDSLLSKGIVYKLFSSLVDYSPSFKGLQEVILNSGDREATAKVRLQAEKGDFGCNPMWIDSFGQLTGFLMNGHDFTGKDEVFINHGWRSMRCAKPFRKDAVYRTYIRMQHVEKTKYRGDLYIIEDGVIIGVFGGMTFLGMSRSLLNKVLPPRRGAEAINTPHPVAAAQEGMAASAKDTERRPLDIPTRAQRQPNSPPTGTLGRILAILSEEVGLSLETLTDDLVFADYGVDSLLSLTITGRIREELDLDMDSSIFTHYSTLGELKEFLGADQNPDDAVACESSNGQHTPQTSDKGSGTLAAQKPDDDTGSDTTLHRVCAIIAEEVGISVQELSSSQDFQELGIDSLSSLTILSRVREELQLDLESDFFDTHPSFCSLQKALCGTEAASNGAPEANETTPSSHRLESDLRTITWHSGQNIVASPPHATSILVSGSPSTARMILVLFPDGSGSAASYGALAPKIRRDIAVYALNCPWRTNGEEILRLGVSLDQMVAKHLVEVGRILDRHQHCRAGSGNASVGLALGGWSAGGILALEAVRQLREAGVAVQKMVLLDAPNPIGLQNPPPRMFHFLDELGILGAGKGKAPAWVLRHFDAMVTLLKSYRPRRLGAEDAPKCLIVYARDGICKDPDGPRMDTKPDDAREMLWLLYNRVDFSAEGWKSLVGQQNLAVGVVEDVNHFSMMNPGPKMAEMGDLIGEFLLGPS.

Residues 7-244 (FIFGDQTGGF…IPIPIWAPYH (238 aa)) are N-terminal acylcarrier protein transacylase domain (SAT). The Ketosynthase family 3 (KS3) domain maps to 374–807 (DAKIAIIGMS…GGNSALLLED (434 aa)). Active-site for beta-ketoacyl synthase activity residues include C546, H681, and H723. The malonyl-CoA:ACP transacylase (MAT) domain stretch occupies residues 908 to 1213 (GFVFSGQGAQ…ASLHRKDDGW (306 aa)). S998 serves as the catalytic For acyl/malonyl transferase activity. The product template (PT) domain stretch occupies residues 1290–1605 (TSSVQKIIQQ…RSLLNKVLPP (316 aa)). The interval 1294–1428 (QKIIQQTDGP…CLLCFADPNS (135 aa)) is N-terminal hotdog fold. One can recognise a PKS/mFAS DH domain in the interval 1294–1600 (QKIIQQTDGP…FLGMSRSLLN (307 aa)). H1327 functions as the Proton acceptor; for dehydratase activity in the catalytic mechanism. Positions 1455-1600 (TDSLLSKGIV…FLGMSRSLLN (146 aa)) are C-terminal hotdog fold. The active-site Proton donor; for dehydratase activity is the D1514. The disordered stretch occupies residues 1629–1653 (AKDTERRPLDIPTRAQRQPNSPPTG). The 78-residue stretch at 1649–1726 (SPPTGTLGRI…ELKEFLGADQ (78 aa)) folds into the Carrier 1 domain. At S1686 the chain carries O-(pantetheine 4'-phosphoryl)serine. The interval 1729–1765 (DDAVACESSNGQHTPQTSDKGSGTLAAQKPDDDTGSD) is disordered. Residues 1735-1749 (ESSNGQHTPQTSDKG) show a composition bias toward polar residues. One can recognise a Carrier 2 domain in the interval 1765–1839 (DTTLHRVCAI…SLQKALCGTE (75 aa)). At S1799 the chain carries O-(pantetheine 4'-phosphoryl)serine. Positions 1875–2151 (ASPPHATSIL…MAEMGDLIGE (277 aa)) are thioesterase (TE) domain. The active-site For thioesterase activity is S1981.

Functionally, polyketide synthase; part of the Pks2 gene cluster that mediates the formation of infectious structures (appressoria), enabling these fungi to kill insects faster. The product of the Pks2 gene cluster is different from the one of Pks1 and has still not been identified. This chain is Polyketide synthase 2, found in Metarhizium guizhouense (strain ARSEF 977).